The sequence spans 132 residues: Fatty acid-binding protein type 3 (132 aa).

The protein belongs to the calycin superfamily. Fatty-acid binding protein (FABP) family.

In Fasciola hepatica (Liver fluke), this protein is Fatty acid-binding protein type 3.